The following is a 251-amino-acid chain: tRNA pseudouridine synthase A (251 aa).

Catalysis depends on Asp53, which acts as the Nucleophile. Tyr110 contributes to the substrate binding site.

This sequence belongs to the tRNA pseudouridine synthase TruA family. Homodimer.

The catalysed reaction is uridine(38/39/40) in tRNA = pseudouridine(38/39/40) in tRNA. Formation of pseudouridine at positions 38, 39 and 40 in the anticodon stem and loop of transfer RNAs. The polypeptide is tRNA pseudouridine synthase A (Mesoplasma florum (strain ATCC 33453 / NBRC 100688 / NCTC 11704 / L1) (Acholeplasma florum)).